Consider the following 601-residue polypeptide: Glutamine--fructose-6-phosphate aminotransferase [isomerizing] (601 aa).

The active-site Nucleophile; for GATase activity is Cys2. The Glutamine amidotransferase type-2 domain maps to 2–218; that stretch reads CGIVGYIGYD…DHEIVIVKKD (217 aa). 2 SIS domains span residues 284 to 423 and 453 to 591; these read IIND…EHGR and IATD…VDKP. Lys596 acts as the For Fru-6P isomerization activity in catalysis.

As to quaternary structure, homodimer.

The protein localises to the cytoplasm. The enzyme catalyses D-fructose 6-phosphate + L-glutamine = D-glucosamine 6-phosphate + L-glutamate. Its function is as follows. Catalyzes the first step in hexosamine metabolism, converting fructose-6P into glucosamine-6P using glutamine as a nitrogen source. The sequence is that of Glutamine--fructose-6-phosphate aminotransferase [isomerizing] from Staphylococcus aureus (strain MRSA252).